A 304-amino-acid polypeptide reads, in one-letter code: Putative S-adenosyl-L-methionine-dependent methyltransferase MSMEG_1482/MSMEI_1446 (304 aa).

Residues Asp130 and 159–160 (DL) each bind S-adenosyl-L-methionine.

Belongs to the UPF0677 family.

In terms of biological role, exhibits S-adenosyl-L-methionine-dependent methyltransferase activity. In Mycolicibacterium smegmatis (strain ATCC 700084 / mc(2)155) (Mycobacterium smegmatis), this protein is Putative S-adenosyl-L-methionine-dependent methyltransferase MSMEG_1482/MSMEI_1446.